A 302-amino-acid chain; its full sequence is MLGKARELANYQDEPEQLPTGSFGKNAFLRLGFERRPERTVLATLHRRAPLIVQQALYWDEGMPTLPCVSIISNAGGILQGDRYAIEIDLEPDTQAHVTTQSATRIQEMDANFATQTQTITLGANSYLEYIPHPIIPHKHSRFVQQTEVTIHPTATLIYSEVLMAGRKYYGTGELFHYDLFSSKFHAAHTDGTSLFTEKFIVEPARGNVSRLGAMGSFHVFGNLILLTPKTHADRLFETIDPVFDMDEGIAWGASRLPNDAGLLFKVLGMESAPVRAAIRKIWEAARQEVTSASLPENFLWA.

Belongs to the UreD family. In terms of assembly, ureD, UreF and UreG form a complex that acts as a GTP-hydrolysis-dependent molecular chaperone, activating the urease apoprotein by helping to assemble the nickel containing metallocenter of UreC. The UreE protein probably delivers the nickel.

The protein localises to the cytoplasm. Its function is as follows. Required for maturation of urease via the functional incorporation of the urease nickel metallocenter. In Brucella canis (strain ATCC 23365 / NCTC 10854 / RM-666), this protein is Urease accessory protein UreD 2.